The sequence spans 354 residues: Guanine nucleotide-binding protein G(i) subunit alpha-1 (354 aa).

Gly2 is lipidated: N-myristoyl glycine. Cys3 is lipidated: S-palmitoyl cysteine. One can recognise a G-alpha domain in the interval Arg32–Phe354. The segment at Lys35 to Thr48 is G1 motif. GTP is bound by residues Glu43 to Thr48, Asp150 to Ser151, and Leu175 to Arg178. Position 47 (Ser47) interacts with Mg(2+). Residues Asp173–Thr181 are G2 motif. Thr181 is a binding site for Mg(2+). The segment at Phe196–Arg205 is G3 motif. GTP is bound by residues Asp200–Gln204, Asn269–Asp272, and Ala326. The interval Ile265–Asp272 is G4 motif. Positions Thr324–Thr329 are G5 motif.

Belongs to the G-alpha family. G(i/o/t/z) subfamily. As to quaternary structure, heterotrimeric G proteins are composed of 3 units; alpha, beta and gamma. The alpha chain contains the guanine nucleotide binding site. Part of a spindle orientation complex. Identified in complex with the beta subunit GNB1 and the gamma subunit GNG1. Identified in complex with the beta subunit GNB1 and the gamma subunit GNG2. GTP binding causes dissociation of the heterotrimer, liberating the individual subunits so that they can interact with downstream effector proteins. Myristoylation at Gly-2 is required for membrane anchoring before palmitoylation. In terms of processing, palmitoylation at Cys-3 varies with membrane lipid composition.

It localises to the nucleus. The protein resides in the cytoplasm. The protein localises to the cell membrane. It is found in the cytoskeleton. Its subcellular location is the microtubule organizing center. It localises to the centrosome. The protein resides in the cell cortex. The protein localises to the membrane. The enzyme catalyses GTP + H2O = GDP + phosphate + H(+). Its function is as follows. Guanine nucleotide-binding proteins (G proteins) function as transducers downstream of G protein-coupled receptors (GPCRs) in numerous signaling cascades. The alpha chain contains the guanine nucleotide binding site and alternates between an active, GTP-bound state and an inactive, GDP-bound state. Signaling by an activated GPCR promotes GDP release and GTP binding. The alpha subunit has a low GTPase activity that converts bound GTP to GDP, thereby terminating the signal. Both GDP release and GTP hydrolysis are modulated by numerous regulatory proteins. Signaling is mediated via effector proteins, such as adenylate cyclase. Inhibits adenylate cyclase activity, leading to decreased intracellular cAMP levels. Required for cortical dynein-dynactin complex recruitment during metaphase. This chain is Guanine nucleotide-binding protein G(i) subunit alpha-1 (gnai1), found in Xenopus laevis (African clawed frog).